Consider the following 413-residue polypeptide: Alpha-1-antitrypsin-like protein GS55-LT (413 aa).

The N-terminal stretch at methionine 1–glycine 21 is a signal peptide. N-linked (GlcNAc...) asparagine glycans are attached at residues asparagine 65, asparagine 102, and asparagine 123. The interval arginine 368–arginine 387 is RCL.

The protein belongs to the serpin family.

It is found in the secreted. In terms of biological role, inhibitor of serine proteases. The sequence is that of Alpha-1-antitrypsin-like protein GS55-LT from Ictidomys tridecemlineatus (Thirteen-lined ground squirrel).